Consider the following 342-residue polypeptide: tRNA N6-adenosine threonylcarbamoyltransferase (342 aa).

Residues His-120 and His-124 each contribute to the Fe cation site. Substrate contacts are provided by residues 142-146, Asp-175, Gly-188, Asp-192, and Asn-281; that span reads VVSGG. Asp-310 provides a ligand contact to Fe cation.

Belongs to the KAE1 / TsaD family. It depends on Fe(2+) as a cofactor.

Its subcellular location is the cytoplasm. The catalysed reaction is L-threonylcarbamoyladenylate + adenosine(37) in tRNA = N(6)-L-threonylcarbamoyladenosine(37) in tRNA + AMP + H(+). Functionally, required for the formation of a threonylcarbamoyl group on adenosine at position 37 (t(6)A37) in tRNAs that read codons beginning with adenine. Is involved in the transfer of the threonylcarbamoyl moiety of threonylcarbamoyl-AMP (TC-AMP) to the N6 group of A37, together with TsaE and TsaB. TsaD likely plays a direct catalytic role in this reaction. This Geobacillus thermodenitrificans (strain NG80-2) protein is tRNA N6-adenosine threonylcarbamoyltransferase.